The primary structure comprises 1034 residues: Probable isoleucine--tRNA ligase, mitochondrial (1034 aa).

A mitochondrion-targeting transit peptide spans 1–32 (MISLNNSFFNKRVIVNSFNNYKRSFGTKSQNE). The 'HIGH' region motif lies at 94-104 (PYANGDLHMGH). A 'KMSKS' region motif is present at residues 655 to 659 (KMSKS). Residue Lys-658 participates in ATP binding.

This sequence belongs to the class-I aminoacyl-tRNA synthetase family.

It is found in the mitochondrion matrix. It catalyses the reaction tRNA(Ile) + L-isoleucine + ATP = L-isoleucyl-tRNA(Ile) + AMP + diphosphate. The chain is Probable isoleucine--tRNA ligase, mitochondrial (mileS) from Dictyostelium discoideum (Social amoeba).